We begin with the raw amino-acid sequence, 509 residues long: MEEYQVYLELDRSRQQDFLYPFIFQEYIYGLVYGHDLNGSILVENVDYDNKSSLLIVKRLITRMYQQNHLIVSSNDFNKNQQFWGYNKNLYSQIISEAFAIVVEIPFYSQLRSSLEGAEVIKSYNKLRSIHAIFPFFEDKFTYLNYVSDVQIPYPIHLEILVQILRYWVKDPPLFHLLRSFLYQYCNWNSFINPKKSISSFSKSNPRFFFFLYNFYVCEYESIFLFLRKKSSHLRLTSFSVLFERIYFYAKIEHLVEVFPKDFLSTLSLFKDPLIHYVRYQGKSILASKNAPLLMNKWKYYLISLWQCYFNVWSQPGTIYINQLSDHSFHFFWGGYFSNVRLNLSVVRSQMLENSFLIEIVMKKLDTIVPIIPIIRSLAKAKFCNVLGHPISKPVWADLSDFGIIDRFLRIRRKISQYYNGSSKKKSLYRIKYILRLSCIKTLVRKHKSTVRAFLKRLGSEELLKEFFTEEEDILSLIFPRASSTLQRLYGGRIWYLDIIFSNDLVNHS.

It belongs to the intron maturase 2 family. MatK subfamily.

The protein localises to the plastid. It localises to the chloroplast. Functionally, usually encoded in the trnK tRNA gene intron. Probably assists in splicing its own and other chloroplast group II introns. The sequence is that of Maturase K from Dalea purpurea (Violet prairie clover).